The sequence spans 334 residues: Glyceraldehyde-3-phosphate dehydrogenase (334 aa).

NAD(+)-binding positions include 11-12 (RI), Asp-33, and Ser-119. D-glyceraldehyde 3-phosphate is bound by residues 149–151 (SCT) and Thr-180. The active-site Nucleophile is Cys-150. Asn-181 contributes to the NAD(+) binding site. Residues Arg-197, 210–211 (TG), and Arg-233 contribute to the D-glyceraldehyde 3-phosphate site. Residue Asn-314 coordinates NAD(+).

It belongs to the glyceraldehyde-3-phosphate dehydrogenase family. As to quaternary structure, homotetramer.

It is found in the cytoplasm. It catalyses the reaction D-glyceraldehyde 3-phosphate + phosphate + NAD(+) = (2R)-3-phospho-glyceroyl phosphate + NADH + H(+). Its pathway is carbohydrate degradation; glycolysis; pyruvate from D-glyceraldehyde 3-phosphate: step 1/5. Catalyzes the oxidative phosphorylation of glyceraldehyde 3-phosphate (G3P) to 1,3-bisphosphoglycerate (BPG) using the cofactor NAD. The first reaction step involves the formation of a hemiacetal intermediate between G3P and a cysteine residue, and this hemiacetal intermediate is then oxidized to a thioester, with concomitant reduction of NAD to NADH. The reduced NADH is then exchanged with the second NAD, and the thioester is attacked by a nucleophilic inorganic phosphate to produce BPG. The polypeptide is Glyceraldehyde-3-phosphate dehydrogenase (gap) (Clostridium pasteurianum).